A 322-amino-acid chain; its full sequence is Myeloid-associated differentiation marker (322 aa).

Residues 1–18 (MPVTVTRTTITTTTTSSS) show a composition bias toward low complexity. Residues 1 to 21 (MPVTVTRTTITTTTTSSSGLG) are disordered. Ser22 is modified (phosphoserine). MARVEL domains lie at 31 to 163 (ALTQ…ARPG) and 168 to 319 (YMAT…HLVF). The next 8 helical transmembrane spans lie at 41–61 (LLQL…GAWT), 70–90 (FTWC…LCGL), 101–121 (FPIT…IIYP), 137–157 (AIAA…EVAW), 171–191 (TVPG…FAFI), 203–223 (LEWC…AILL), 239–259 (FLSG…VLWP), and 294–314 (LAVA…LVHS).

It belongs to the MAL family. Widely expressed. Not detected in thymus.

It localises to the membrane. The polypeptide is Myeloid-associated differentiation marker (MYADM) (Homo sapiens (Human)).